A 442-amino-acid chain; its full sequence is 3-isopropylmalate dehydratase large subunit (442 aa).

Residues C347, C407, and C410 each coordinate [4Fe-4S] cluster.

It belongs to the aconitase/IPM isomerase family. LeuC type 1 subfamily. Heterodimer of LeuC and LeuD. The cofactor is [4Fe-4S] cluster.

The enzyme catalyses (2R,3S)-3-isopropylmalate = (2S)-2-isopropylmalate. Its pathway is amino-acid biosynthesis; L-leucine biosynthesis; L-leucine from 3-methyl-2-oxobutanoate: step 2/4. In terms of biological role, catalyzes the isomerization between 2-isopropylmalate and 3-isopropylmalate, via the formation of 2-isopropylmaleate. The chain is 3-isopropylmalate dehydratase large subunit from Buchnera aphidicola subsp. Uroleucon solidaginis.